The chain runs to 556 residues: Urocanate hydratase (556 aa).

NAD(+) is bound by residues Gly-52 to Gly-53, Gln-130, Gly-176 to Gly-178, Glu-196, Arg-201, Asn-242 to Ala-243, Gln-263 to His-267, Tyr-273 to Leu-274, and Tyr-322. Cys-410 is an active-site residue. Position 492 (Gly-492) interacts with NAD(+).

It belongs to the urocanase family. The cofactor is NAD(+).

It is found in the cytoplasm. The catalysed reaction is 4-imidazolone-5-propanoate = trans-urocanate + H2O. It functions in the pathway amino-acid degradation; L-histidine degradation into L-glutamate; N-formimidoyl-L-glutamate from L-histidine: step 2/3. In terms of biological role, catalyzes the conversion of urocanate to 4-imidazolone-5-propionate. This Acidiphilium cryptum (strain JF-5) protein is Urocanate hydratase.